The chain runs to 279 residues: Virginiamycin B lyase (279 aa).

Position 215 (His215) interacts with substrate. Glu253 contributes to the Mg(2+) binding site. Catalysis depends on His255, which acts as the Proton acceptor. Glu270 is a Mg(2+) binding site.

The protein belongs to the Vgb family. Monomer. Mg(2+) serves as cofactor.

Inactivates the type B streptogramin antibiotics by linearizing the lactone ring at the ester linkage, generating a free phenylglycine carboxylate and converting the threonyl moiety into 2-amino-butenoic acid. This chain is Virginiamycin B lyase, found in Nocardia farcinica (strain IFM 10152).